A 387-amino-acid chain; its full sequence is Glutamate N-acetyltransferase (387 aa).

Substrate contacts are provided by threonine 140, lysine 162, threonine 173, glutamate 257, asparagine 382, and threonine 387. Residue threonine 173 is the Nucleophile of the active site.

This sequence belongs to the ArgJ family. As to quaternary structure, heterotetramer of two alpha and two beta chains.

Its subcellular location is the cytoplasm. It catalyses the reaction N(2)-acetyl-L-ornithine + L-glutamate = N-acetyl-L-glutamate + L-ornithine. It participates in amino-acid biosynthesis; L-arginine biosynthesis; L-ornithine and N-acetyl-L-glutamate from L-glutamate and N(2)-acetyl-L-ornithine (cyclic): step 1/1. In terms of biological role, catalyzes the transfer of the acetyl group from N(2)-acetylornithine to glutamate, forming N-acetylglutamate and L-ornithine. In Methanopyrus kandleri (strain AV19 / DSM 6324 / JCM 9639 / NBRC 100938), this protein is Glutamate N-acetyltransferase.